A 324-amino-acid chain; its full sequence is Methionyl-tRNA formyltransferase (324 aa).

109-112 (SILP) lines the (6S)-5,6,7,8-tetrahydrofolate pocket.

It belongs to the Fmt family.

The catalysed reaction is L-methionyl-tRNA(fMet) + (6R)-10-formyltetrahydrofolate = N-formyl-L-methionyl-tRNA(fMet) + (6S)-5,6,7,8-tetrahydrofolate + H(+). In terms of biological role, attaches a formyl group to the free amino group of methionyl-tRNA(fMet). The formyl group appears to play a dual role in the initiator identity of N-formylmethionyl-tRNA by promoting its recognition by IF2 and preventing the misappropriation of this tRNA by the elongation apparatus. The sequence is that of Methionyl-tRNA formyltransferase from Acidothermus cellulolyticus (strain ATCC 43068 / DSM 8971 / 11B).